The sequence spans 122 residues: Large ribosomal subunit protein uL14 (122 aa).

This sequence belongs to the universal ribosomal protein uL14 family. In terms of assembly, part of the 50S ribosomal subunit. Forms a cluster with proteins L3 and L19. In the 70S ribosome, L14 and L19 interact and together make contacts with the 16S rRNA in bridges B5 and B8.

Its function is as follows. Binds to 23S rRNA. Forms part of two intersubunit bridges in the 70S ribosome. This Nitrosospira multiformis (strain ATCC 25196 / NCIMB 11849 / C 71) protein is Large ribosomal subunit protein uL14.